A 368-amino-acid chain; its full sequence is Phosphate acyltransferase (368 aa).

Residues 334–368 form a disordered region; that stretch reads EGSLEQAARDASGAGHASPIAGQPAEPYAAQSSKA.

The protein belongs to the PlsX family. As to quaternary structure, homodimer. Probably interacts with PlsY.

It is found in the cytoplasm. It catalyses the reaction a fatty acyl-[ACP] + phosphate = an acyl phosphate + holo-[ACP]. Its pathway is lipid metabolism; phospholipid metabolism. In terms of biological role, catalyzes the reversible formation of acyl-phosphate (acyl-PO(4)) from acyl-[acyl-carrier-protein] (acyl-ACP). This enzyme utilizes acyl-ACP as fatty acyl donor, but not acyl-CoA. In Paraburkholderia xenovorans (strain LB400), this protein is Phosphate acyltransferase.